Reading from the N-terminus, the 406-residue chain is Probable delta-aminolevulinic acid dehydratase 2, chloroplastic (406 aa).

A chloroplast-targeting transit peptide spans 1 to 34 (MTSSMFRSPCKIPSVKGFEQKSYVGLKAASYNVR). Residue Lys275 is the Schiff-base intermediate with substrate of the active site. Residues Arg285 and Lys291 each coordinate 5-aminolevulinate. Glu307 contributes to the Mg(2+) binding site. The Schiff-base intermediate with substrate role is filled by Lys322. Positions 348 and 387 each coordinate 5-aminolevulinate.

It belongs to the ALAD family. As to quaternary structure, homooctamer. The cofactor is Mg(2+).

It localises to the plastid. Its subcellular location is the chloroplast. The catalysed reaction is 2 5-aminolevulinate = porphobilinogen + 2 H2O + H(+). It functions in the pathway porphyrin-containing compound metabolism; protoporphyrin-IX biosynthesis; coproporphyrinogen-III from 5-aminolevulinate: step 1/4. It participates in porphyrin-containing compound metabolism; chlorophyll biosynthesis. Catalyzes an early step in the biosynthesis of tetrapyrroles. Binds two molecules of 5-aminolevulinate per subunit, each at a distinct site, and catalyzes their condensation to form porphobilinogen. The sequence is that of Probable delta-aminolevulinic acid dehydratase 2, chloroplastic (HEMB2) from Arabidopsis thaliana (Mouse-ear cress).